The sequence spans 386 residues: Leupaxin (386 aa).

At Met-1 the chain carries N-acetylmethionine. An LD motif 1 motif is present at residues 3-15 (ELDALLEELERCT). A Phosphoserine modification is found at Ser-19. The interval 19–52 (SEEYSNPVSCHLDQQSTEESKIPQTPKTLSSQGN) is disordered. Tyr-22 is subject to Phosphotyrosine. Residues 22–52 (YSNPVSCHLDQQSTEESKIPQTPKTLSSQGN) show a composition bias toward polar residues. A Phosphoserine modification is found at Ser-54. Tyr-62 is modified (phosphotyrosine). 2 consecutive short sequence motifs (LD motif) follow at residues 70 to 82 (NVYS…KESV) and 92 to 103 (QLDELMAHLSEM). At Tyr-72 the chain carries Phosphotyrosine; by LYN. The residue at position 81 (Ser-81) is a Phosphoserine. 4 consecutive LIM zinc-binding domains span residues 150 to 208 (GYCA…RLFS), 209 to 267 (PRCA…AMFS), 268 to 326 (PKCG…HRRG), and 327 to 386 (TLCH…LFSQ).

This sequence belongs to the paxillin family. As to quaternary structure, interacts with unphosphorylated ITGA4. Interacts with AR and SRF. Interacts with PTK2B/PYK2, PTPN22 and PTPN12. Interacts (via LD motif 3) with LYN and the interaction is induced upon B-cell antigen receptor (BCR) activation. Interacts (via LD motif 3) with PTK2/FAK. Phosphorylated on tyrosine residues. Phosphorylation on Tyr-72 is important for its inhibitory function. Bombesin stimulates phosphorylation on Tyr-22, Tyr-62 and Tyr-72. Expressed in osteoclasts (at protein level). Highly expressed in vascular smooth muscle.

The protein localises to the cytoplasm. It is found in the cell junction. The protein resides in the focal adhesion. Its subcellular location is the nucleus. It localises to the perinuclear region. The protein localises to the cell projection. It is found in the podosome. The protein resides in the cell membrane. Its function is as follows. Transcriptional coactivator for androgen receptor (AR) and serum response factor (SRF). Contributes to the regulation of cell adhesion, spreading and cell migration and acts as a negative regulator in integrin-mediated cell adhesion events. Suppresses the integrin-induced tyrosine phosphorylation of paxillin (PXN). May play a critical role as an adapter protein in the formation of the adhesion zone in osteoclasts. Negatively regulates B-cell antigen receptor (BCR) signaling. The chain is Leupaxin (Lpxn) from Mus musculus (Mouse).